We begin with the raw amino-acid sequence, 186 residues long: Potassium-transporting ATPase KdpC subunit (186 aa).

The chain crosses the membrane as a helical span at residues 10 to 30 (LTIITMVLCGFLFPLAITLIG).

It belongs to the KdpC family. The system is composed of three essential subunits: KdpA, KdpB and KdpC.

Its subcellular location is the cell membrane. Part of the high-affinity ATP-driven potassium transport (or Kdp) system, which catalyzes the hydrolysis of ATP coupled with the electrogenic transport of potassium into the cytoplasm. This subunit acts as a catalytic chaperone that increases the ATP-binding affinity of the ATP-hydrolyzing subunit KdpB by the formation of a transient KdpB/KdpC/ATP ternary complex. The protein is Potassium-transporting ATPase KdpC subunit of Staphylococcus aureus (strain MRSA252).